Consider the following 21-residue polypeptide: Bombinin-H4 (21 aa).

Ile2 is subject to D-allo-isoleucine. Position 20 is an isoleucine amide (Ile20).

Belongs to the bombinin family. In terms of tissue distribution, expressed by the skin glands.

It is found in the secreted. Has antimicrobial and hemolytic activities. This Bombina variegata (Yellow-bellied toad) protein is Bombinin-H4.